The chain runs to 310 residues: HPr kinase/phosphorylase (310 aa).

Residues H138 and K159 contribute to the active site. G153 to S160 contacts ATP. Residue S160 participates in Mg(2+) binding. D177 acts as the Proton acceptor; for phosphorylation activity. Proton donor; for dephosphorylation activity in catalysis. The important for the catalytic mechanism of both phosphorylation and dephosphorylation stretch occupies residues I201 to D210. E202 serves as a coordination point for Mg(2+). The active site involves R243. An important for the catalytic mechanism of dephosphorylation region spans residues P264–R269.

This sequence belongs to the HPrK/P family. Homohexamer. Requires Mg(2+) as cofactor.

It carries out the reaction [HPr protein]-L-serine + ATP = [HPr protein]-O-phospho-L-serine + ADP + H(+). It catalyses the reaction [HPr protein]-O-phospho-L-serine + phosphate + H(+) = [HPr protein]-L-serine + diphosphate. Its function is as follows. Catalyzes the ATP- as well as the pyrophosphate-dependent phosphorylation of a specific serine residue in HPr, a phosphocarrier protein of the phosphoenolpyruvate-dependent sugar phosphotransferase system (PTS). HprK/P also catalyzes the pyrophosphate-producing, inorganic phosphate-dependent dephosphorylation (phosphorolysis) of seryl-phosphorylated HPr (P-Ser-HPr). The two antagonistic activities of HprK/P are regulated by several intracellular metabolites, which change their concentration in response to the absence or presence of rapidly metabolisable carbon sources (glucose, fructose, etc.) in the growth medium. Therefore, by controlling the phosphorylation state of HPr, HPrK/P is a sensor enzyme that plays a major role in the regulation of carbon metabolism and sugar transport: it mediates carbon catabolite repression (CCR), and regulates PTS-catalyzed carbohydrate uptake and inducer exclusion. This chain is HPr kinase/phosphorylase, found in Lactococcus lactis subsp. cremoris (strain MG1363).